Consider the following 710-residue polypeptide: F-box only protein 40 (710 aa).

The TRAF-type zinc-finger motif lies at 53–114; it reads EHTLLCPLEQ…VDSETFLHEN (62 aa). Disordered regions lie at residues 152–174 and 234–279; these read DATE…GAVG and GSLG…SQEL. Residues 238-248 are compositionally biased toward basic and acidic residues; sequence KSEDKNGDVAG. The region spanning 572–626 is the F-box domain; it reads LNSLTSLPLEVLQYIAGFLDSISLSQLSQVSVLMRNICATLLQERGMVLSQWKKK.

Directly interacts with SKP1 and CUL1. In terms of tissue distribution, expressed only in heart and skeletal muscle.

It localises to the cytoplasm. Functionally, probable substrate-recognition component of the SCF (SKP1-CUL1-F-box protein)-type E3 ubiquitin ligase complex that may function in myogenesis. This Mus musculus (Mouse) protein is F-box only protein 40 (Fbxo40).